A 269-amino-acid polypeptide reads, in one-letter code: Ribosomal RNA small subunit methyltransferase A (269 aa).

S-adenosyl-L-methionine-binding residues include Asn-20, Leu-22, Gly-47, Glu-68, Asp-90, and Asn-110.

Belongs to the class I-like SAM-binding methyltransferase superfamily. rRNA adenine N(6)-methyltransferase family. RsmA subfamily.

The protein localises to the cytoplasm. The catalysed reaction is adenosine(1518)/adenosine(1519) in 16S rRNA + 4 S-adenosyl-L-methionine = N(6)-dimethyladenosine(1518)/N(6)-dimethyladenosine(1519) in 16S rRNA + 4 S-adenosyl-L-homocysteine + 4 H(+). Specifically dimethylates two adjacent adenosines (A1518 and A1519) in the loop of a conserved hairpin near the 3'-end of 16S rRNA in the 30S particle. May play a critical role in biogenesis of 30S subunits. The polypeptide is Ribosomal RNA small subunit methyltransferase A (Chlorobium phaeobacteroides (strain DSM 266 / SMG 266 / 2430)).